A 360-amino-acid polypeptide reads, in one-letter code: Phospho-N-acetylmuramoyl-pentapeptide-transferase (360 aa).

10 helical membrane-spanning segments follow: residues 27 to 47, 70 to 90, 93 to 113, 134 to 154, 168 to 188, 205 to 225, 239 to 259, 262 to 282, 288 to 308, and 337 to 357; these read GALI…ISSL, GTPT…SILW, LSSV…AIGF, LALE…AGQE, LLLN…VGAG, VMVA…AIFA, LSVI…FNAP, AIFM…TVAV, IVLA…IIQV, and QVVI…LSTL.

This sequence belongs to the glycosyltransferase 4 family. MraY subfamily. Mg(2+) serves as cofactor.

Its subcellular location is the cell inner membrane. The catalysed reaction is UDP-N-acetyl-alpha-D-muramoyl-L-alanyl-gamma-D-glutamyl-meso-2,6-diaminopimeloyl-D-alanyl-D-alanine + di-trans,octa-cis-undecaprenyl phosphate = di-trans,octa-cis-undecaprenyl diphospho-N-acetyl-alpha-D-muramoyl-L-alanyl-D-glutamyl-meso-2,6-diaminopimeloyl-D-alanyl-D-alanine + UMP. Its pathway is cell wall biogenesis; peptidoglycan biosynthesis. Catalyzes the initial step of the lipid cycle reactions in the biosynthesis of the cell wall peptidoglycan: transfers peptidoglycan precursor phospho-MurNAc-pentapeptide from UDP-MurNAc-pentapeptide onto the lipid carrier undecaprenyl phosphate, yielding undecaprenyl-pyrophosphoryl-MurNAc-pentapeptide, known as lipid I. The polypeptide is Phospho-N-acetylmuramoyl-pentapeptide-transferase (Chelativorans sp. (strain BNC1)).